The sequence spans 124 residues: Urocortin (124 aa).

Residues 1–25 (MRQAGRAALLAALLLLVQLCPGSSQ) form the signal peptide. Residues 23–46 (SSQRSPEAAGVQDPSLRWSPGARN) form a disordered region. The propeptide occupies 26 to 82 (RSPEAAGVQDPSLRWSPGARNQGGGARALLLLLAERFPRRAGPGRLGLGTAGERPRR). Val122 bears the Valine amide mark.

Belongs to the sauvagine/corticotropin-releasing factor/urotensin I family. As to quaternary structure, interacts with CRHR1 and CRHR2 (via their N-terminal extracellular domain). Keratinocytes in epidermis and the outer and inner root sheaths of hair follicles, epithelium of sebaceous and sweat glands, erector pili muscle, cutaneous blood vessel walls, cutaneous nerves and dermal mononuclear cells. Detected in plasma cells in the lamia propria in colon mucosa (at protein level). Expressed in pituitary and adrenal glands. Detected in plasma cells in the lamia propria in colon mucosa.

Its subcellular location is the secreted. Functionally, acts in vitro to stimulate the secretion of adrenocorticotropic hormone (ACTH). Binds with high affinity to CRF receptor types 1, 2-alpha, and 2-beta. Plays a role in the establishment of normal hearing thresholds. Reduces food intake and regulates ghrelin levels in gastric body and plasma. The chain is Urocortin (UCN) from Homo sapiens (Human).